Consider the following 312-residue polypeptide: Olfactory receptor 1D2 (312 aa).

The Extracellular portion of the chain corresponds to 1–25; sequence MDGGNQSEGSEFLLLGMSESPEQQQ. Asparagine 5 carries an N-linked (GlcNAc...) asparagine glycan. The chain crosses the membrane as a helical span at residues 26 to 49; the sequence is ILFWMFLSMYLVTVVGNVLIILAI. Topologically, residues 50-57 are cytoplasmic; sequence NSDSHLHT. The helical transmembrane segment at 58–79 threads the bilayer; the sequence is PMYFFLANLSFTDLFFVTNTIP. Residues 80–100 lie on the Extracellular side of the membrane; it reads KMLVNLQSQNKAISYAGCLTQ. Residues cysteine 97 and cysteine 189 are joined by a disulfide bond. Residues 101–120 traverse the membrane as a helical segment; that stretch reads LYFLVSLVALDNLILAVMAY. The Cytoplasmic portion of the chain corresponds to 121-139; the sequence is DRYVAICCPLHYTTAMSPK. The chain crosses the membrane as a helical span at residues 140-158; it reads LCILLLSLCWVLSVLYGLI. The Extracellular segment spans residues 159 to 196; it reads HTILMTRVTFCGSRKIHYIFCEMYVLLRMACSNIQINH. Residue asparagine 195 is glycosylated (N-linked (GlcNAc...) asparagine). Residues 197 to 219 form a helical membrane-spanning segment; sequence TVLIATGCFIFLIPFGFVIISYV. Topologically, residues 220–236 are cytoplasmic; that stretch reads LIIRAILRIPSVSKKYK. A helical membrane pass occupies residues 237–259; sequence AFSTCASHLGAVSLFYGTLCMVY. The Extracellular segment spans residues 260–271; sequence LKPLHTFSVKDS. The chain crosses the membrane as a helical span at residues 272 to 291; sequence VATVMYAVVTPMMNPFIYSL. Residues 292–312 are Cytoplasmic-facing; sequence RNKDMHGALGRLLDTHFKRLT.

It belongs to the G-protein coupled receptor 1 family.

It is found in the cell membrane. In terms of biological role, odorant receptor. In Gorilla gorilla gorilla (Western lowland gorilla), this protein is Olfactory receptor 1D2 (OR1D2).